Consider the following 660-residue polypeptide: Peroxisomal acyl-coenzyme A oxidase 1 (660 aa).

A Phosphoserine modification is found at S26. N6-succinyllysine is present on residues K89 and K90. Residues T139 and G178 each contribute to the FAD site. K216 is modified (N6-acetyllysine). K241 bears the N6-succinyllysine mark. An N6-acetyllysine mark is found at K255, K267, and K272. K349 carries the post-translational modification N6-succinyllysine. E421 functions as the Proton acceptor in the catalytic mechanism. N6-acetyllysine; alternate occurs at positions 437 and 446. An N6-succinyllysine; alternate mark is found at K437 and K446. Residues K500 and K504 each carry the N6-acetyllysine modification. K512 carries the N6-acetyllysine; alternate modification. K512 carries the N6-succinyllysine; alternate modification. The residue at position 542 (K542) is an N6-succinyllysine. K637 carries the N6-acetyllysine; alternate modification. K637 bears the N6-succinyllysine; alternate mark. At K643 the chain carries N6-succinyllysine. S649 bears the Phosphoserine mark. K651 is subject to N6-acetyllysine. At K654 the chain carries N6-succinyllysine. Residues 658–660 carry the Microbody targeting signal motif; that stretch reads SKL.

The protein belongs to the acyl-CoA oxidase family. In terms of assembly, homodimer. Interacts with LONP2. FAD serves as cofactor. As to expression, widely expressed with highest levels of isoform 1 and isoform 2 detected in testis. Isoform 1 is expressed at higher levels than isoform 2 in liver and kidney while isoform 2 levels are higher in brain, lung, muscle, white adipose tissue and testis. Levels are almost equal in heart.

It is found in the peroxisome. It carries out the reaction a 2,3-saturated acyl-CoA + O2 = a (2E)-enoyl-CoA + H2O2. It catalyses the reaction hexadecanoyl-CoA + O2 = (2E)-hexadecenoyl-CoA + H2O2. The enzyme catalyses dodecanoyl-CoA + O2 = (2E)-dodecenoyl-CoA + H2O2. The catalysed reaction is octanoyl-CoA + O2 = (2E)-octenoyl-CoA + H2O2. It carries out the reaction decanoyl-CoA + O2 = (2E)-decenoyl-CoA + H2O2. It catalyses the reaction tetradecanoyl-CoA + O2 = (2E)-tetradecenoyl-CoA + H2O2. The enzyme catalyses hexadecanedioyl-CoA + O2 = (2E)-hexadecenedioyl-CoA + H2O2. The catalysed reaction is (5Z,8Z,11Z,14Z,17Z)-eicosapentaenoyl-CoA + O2 = (2E,5Z,8Z,11Z,14Z,17Z)-icosahexaenoyl-CoA + H2O2. It carries out the reaction tetracosanoyl-CoA + O2 = (2E)-tetracosenoyl-CoA + H2O2. It catalyses the reaction glutaryl-CoA + O2 = (2E)-glutaconyl-CoA + H2O2. The enzyme catalyses hexanoyl-CoA + O2 = (2E)-hexenoyl-CoA + H2O2. The catalysed reaction is octadecanoyl-CoA + O2 = (2E)-octadecenoyl-CoA + H2O2. It carries out the reaction (6Z,9Z,12Z,15Z,18Z,21Z)-tetracosahexaenoyl-CoA + O2 = (2E,6Z,9Z,12Z,15Z,18Z,21Z)-tetracosaheptaenoyl-CoA + H2O2. Its pathway is lipid metabolism; peroxisomal fatty acid beta-oxidation. Its function is as follows. Involved in the initial and rate-limiting step of peroxisomal beta-oxidation of straight-chain saturated and unsaturated very-long-chain fatty acids. Catalyzes the desaturation of fatty acyl-CoAs such as palmitoyl-CoA (hexadecanoyl-CoA) to 2-trans-enoyl-CoAs ((2E)-enoyl-CoAs) such as (2E)-hexadecenoyl-CoA, and donates electrons directly to molecular oxygen (O(2)), thereby producing hydrogen peroxide (H(2)O(2)). Functionally, shows highest activity against medium-chain fatty acyl-CoAs. Shows optimum activity with a chain length of 10 carbons (decanoyl-CoA) in vitro. In terms of biological role, is active against a much broader range of substrates and shows activity towards long-chain fatty acyl-CoAs. The polypeptide is Peroxisomal acyl-coenzyme A oxidase 1 (Homo sapiens (Human)).